Reading from the N-terminus, the 126-residue chain is uncharacterized protein (126 aa).

The disordered stretch occupies residues 1–101 (MQASSEPANV…KSVGSQSADE (101 aa)). 2 stretches are compositionally biased toward polar residues: residues 14–27 (GQNQ…STSP) and 86–99 (DTEA…SQSA).

This is an uncharacterized protein from Schizosaccharomyces pombe (strain 972 / ATCC 24843) (Fission yeast).